The following is a 439-amino-acid chain: Methylenetetrahydrofolate--tRNA-(uracil-5-)-methyltransferase TrmFO (439 aa).

8-13 (GAGLAG) provides a ligand contact to FAD.

It belongs to the MnmG family. TrmFO subfamily. FAD is required as a cofactor.

It is found in the cytoplasm. The catalysed reaction is uridine(54) in tRNA + (6R)-5,10-methylene-5,6,7,8-tetrahydrofolate + NADH + H(+) = 5-methyluridine(54) in tRNA + (6S)-5,6,7,8-tetrahydrofolate + NAD(+). It carries out the reaction uridine(54) in tRNA + (6R)-5,10-methylene-5,6,7,8-tetrahydrofolate + NADPH + H(+) = 5-methyluridine(54) in tRNA + (6S)-5,6,7,8-tetrahydrofolate + NADP(+). In terms of biological role, catalyzes the folate-dependent formation of 5-methyl-uridine at position 54 (M-5-U54) in all tRNAs. The polypeptide is Methylenetetrahydrofolate--tRNA-(uracil-5-)-methyltransferase TrmFO (Lacticaseibacillus paracasei (strain ATCC 334 / BCRC 17002 / CCUG 31169 / CIP 107868 / KCTC 3260 / NRRL B-441) (Lactobacillus paracasei)).